We begin with the raw amino-acid sequence, 144 residues long: Large ribosomal subunit protein uL15 (144 aa).

The segment at methionine 1–histidine 58 is disordered. The span at arginine 21–glycine 31 shows a compositional bias: gly residues.

This sequence belongs to the universal ribosomal protein uL15 family. In terms of assembly, part of the 50S ribosomal subunit.

In terms of biological role, binds to the 23S rRNA. The protein is Large ribosomal subunit protein uL15 of Azotobacter vinelandii (strain DJ / ATCC BAA-1303).